A 766-amino-acid polypeptide reads, in one-letter code: Ribonuclease Z, mitochondrial (766 aa).

Residues 1–25 (MYLVKSAGSPIYRTLRTLTTSNLMA) constitute a mitochondrion transit peptide.

Belongs to the RNase Z family. As to quaternary structure, homodimer. Zn(2+) is required as a cofactor.

The protein resides in the nucleus. Its subcellular location is the mitochondrion. It carries out the reaction Endonucleolytic cleavage of RNA, removing extra 3' nucleotides from tRNA precursor, generating 3' termini of tRNAs. A 3'-hydroxy group is left at the tRNA terminus and a 5'-phosphoryl group is left at the trailer molecule.. In terms of biological role, zinc phosphodiesterase, which displays some tRNA 3'-processing endonuclease activity of nuclear and mitochondrial pre-tRNA. Probably involved in tRNA maturation, by removing a 3'-trailer from precursor tRNA. May participate in tRNA processing in the developing embryo. The chain is Ribonuclease Z, mitochondrial from Drosophila melanogaster (Fruit fly).